Here is a 117-residue protein sequence, read N- to C-terminus: Ribosome-binding factor A (117 aa).

It belongs to the RbfA family. As to quaternary structure, monomer. Binds 30S ribosomal subunits, but not 50S ribosomal subunits or 70S ribosomes.

The protein resides in the cytoplasm. In terms of biological role, one of several proteins that assist in the late maturation steps of the functional core of the 30S ribosomal subunit. Associates with free 30S ribosomal subunits (but not with 30S subunits that are part of 70S ribosomes or polysomes). Required for efficient processing of 16S rRNA. May interact with the 5'-terminal helix region of 16S rRNA. The sequence is that of Ribosome-binding factor A from Leptospira borgpetersenii serovar Hardjo-bovis (strain JB197).